The sequence spans 359 residues: AA9 family lytic polysaccharide monooxygenase B (359 aa).

Positions M1 to A18 are cleaved as a signal peptide. Positions 19 and 102 each coordinate Cu(2+). Disulfide bonds link C72–C190 and C113–C117. N-linked (GlcNAc...) asparagine glycosylation is present at N150. O2-binding residues include H176 and Q185. Y187 lines the Cu(2+) pocket. Positions G241–K310 are disordered. Polar residues predominate over residues G245–H254. Positions T255–I304 are enriched in low complexity. An N-linked (GlcNAc...) asparagine glycan is attached at N345.

It belongs to the polysaccharide monooxygenase AA9 family. Requires Cu(2+) as cofactor.

It localises to the secreted. The enzyme catalyses [(1-&gt;4)-beta-D-glucosyl]n+m + reduced acceptor + O2 = 4-dehydro-beta-D-glucosyl-[(1-&gt;4)-beta-D-glucosyl]n-1 + [(1-&gt;4)-beta-D-glucosyl]m + acceptor + H2O.. Lytic polysaccharide monooxygenase (LPMO) that depolymerizes crystalline and amorphous polysaccharides via the oxidation of scissile alpha- or beta-(1-4)-glycosidic bonds, yielding C1 and C4 oxidation products. Catalysis by LPMOs requires the reduction of the active-site copper from Cu(II) to Cu(I) by a reducing agent and H(2)O(2) or O(2) as a cosubstrate. Active on cellulose and on xyloglucan for deconstruction of plant biomass. This Geotrichum candidum (Oospora lactis) protein is AA9 family lytic polysaccharide monooxygenase B.